Consider the following 361-residue polypeptide: Peptide chain release factor 1 (361 aa).

Residue Q237 is modified to N5-methylglutamine. The segment at 285–306 (QAEQSAQQTEQRRQLVGSGDRS) is disordered.

The protein belongs to the prokaryotic/mitochondrial release factor family. Methylated by PrmC. Methylation increases the termination efficiency of RF1.

It is found in the cytoplasm. Its function is as follows. Peptide chain release factor 1 directs the termination of translation in response to the peptide chain termination codons UAG and UAA. The chain is Peptide chain release factor 1 from Alkalilimnicola ehrlichii (strain ATCC BAA-1101 / DSM 17681 / MLHE-1).